A 104-amino-acid chain; its full sequence is Large ribosomal subunit protein bL21 (104 aa).

It belongs to the bacterial ribosomal protein bL21 family. Part of the 50S ribosomal subunit. Contacts protein L20.

Its function is as follows. This protein binds to 23S rRNA in the presence of protein L20. This chain is Large ribosomal subunit protein bL21, found in Pseudomonas putida (strain GB-1).